Reading from the N-terminus, the 96-residue chain is Probable quinol oxidase subunit 4 (96 aa).

3 consecutive transmembrane segments (helical) span residues 8–28 (TVGF…TLYT), 37–57 (TIIF…FMHL), and 68–88 (FKVI…YWVM).

It belongs to the cytochrome c oxidase bacterial subunit 4 family.

It localises to the cell membrane. The enzyme catalyses 2 a quinol + O2 = 2 a quinone + 2 H2O. Functionally, catalyzes quinol oxidation with the concomitant reduction of oxygen to water. The polypeptide is Probable quinol oxidase subunit 4 (qoxD) (Staphylococcus haemolyticus (strain JCSC1435)).